Reading from the N-terminus, the 391-residue chain is Transposase for insertion sequence element IS905 (391 aa).

The protein belongs to the transposase mutator family.

In terms of biological role, required for the transposition of the insertion element. The chain is Transposase for insertion sequence element IS905 (tra905) from Lactococcus lactis subsp. lactis (strain IL1403) (Streptococcus lactis).